The following is a 407-amino-acid chain: Methylthioribose kinase (407 aa).

Residues N40, K57, and 111–113 (EDL) contribute to the ATP site. A substrate-binding site is contributed by D229. Position 246–248 (246–248 (DAE)) interacts with ATP. R344 serves as a coordination point for substrate.

The protein belongs to the methylthioribose kinase family. In terms of assembly, homodimer.

The catalysed reaction is 5-(methylsulfanyl)-D-ribose + ATP = 5-(methylsulfanyl)-alpha-D-ribose 1-phosphate + ADP + H(+). It participates in amino-acid biosynthesis; L-methionine biosynthesis via salvage pathway; S-methyl-5-thio-alpha-D-ribose 1-phosphate from S-methyl-5'-thioadenosine (hydrolase route): step 2/2. In terms of biological role, catalyzes the phosphorylation of methylthioribose into methylthioribose-1-phosphate. This is Methylthioribose kinase from Yersinia pseudotuberculosis serotype O:3 (strain YPIII).